The primary structure comprises 269 residues: Aquaporin-7 (269 aa).

Residues 1–20 (MAGSVLENIQSVLQKTWVRE) are Cytoplasmic-facing. Ser4 is subject to Phosphoserine. The helical transmembrane segment at 21-38 (FLAEFLSTYVLMVFGLGS) threads the bilayer. The Extracellular segment spans residues 39–51 (VAHMVLGERLGSY). The chain crosses the membrane as a helical span at residues 52-69 (LGVNLGFGFGVTMGIHVA). Residues 70–73 (GGIS) lie on the Cytoplasmic side of the membrane. The discontinuously helical intramembrane region spans 74–87 (GAHMNAAVTFTNCA). The NPA 1 signature appears at 78-80 (NAA). The Cytoplasmic segment spans residues 88 to 95 (LGRMAWKK). A helical membrane pass occupies residues 96-116 (FPIYVLGQFLGSFLAAATTYL). Over 117-151 (IFYGAINHYAGGELLVTGPKSTANIFATYLPEHMT) the chain is Extracellular. A helical transmembrane segment spans residues 152–172 (LWRGFVDEVFVTGMLQLCIFA). Residues 173-184 (ITDKLNSPALQG) are Cytoplasmic-facing. The chain crosses the membrane as a helical span at residues 185–201 (TEPLMIGILVCVLGVSL). At 202–205 (GMNT) the chain is on the extracellular side. Positions 206–219 (GYAINPSRDLPPRF) form an intramembrane region, discontinuously helical. Residues 210–212 (NPS) carry the NPA 2 motif. Topologically, residues 220–237 (FTFIAGWGKKVFSAGNNW) are extracellular. The helical transmembrane segment at 238-259 (WWVPVVAPLLGAYLGGIVYLGL) threads the bilayer. Topologically, residues 260-269 (IHAGIPPQGS) are cytoplasmic.

Belongs to the MIP/aquaporin (TC 1.A.8) family. Homotetramer; each monomer provides an independent glycerol/water pore. Two homotetramers on opposing membranes can dimerize, forming a cell-cell junction. Interacts with PLIN1. Phosphorylation by PKA could prevent the interaction with PLIN1. As to expression, detected in heart, kidney and testis.

The protein resides in the cell membrane. The protein localises to the cytoplasmic vesicle membrane. Its subcellular location is the lipid droplet. It carries out the reaction glycerol(in) = glycerol(out). It catalyses the reaction H2O(in) = H2O(out). The catalysed reaction is urea(in) = urea(out). Its activity is regulated as follows. Glycerol transport is regulated by pH, with the porin being permeable to glycerol at pH 7.4 but not at pH 5.5. Water permeability, however, is not influenced by pH. Not inhibited by mercury ions. Aquaglyceroporins form homotetrameric transmembrane channels, with each monomer independently mediating glycerol and water transport across the plasma membrane along their osmotic gradient. Could also be permeable to urea. Mediates the efflux of glycerol, formed upon triglyceride hydrolysis, to avoid its accumulation in adipocytes and to make it available to other tissues. In the kidney, mediates the reabsorption of glycerol, preventing its loss in urine, again participating to energy homeostasis. In pancreatic beta cells, it also mediates the efflux of glycerol, regulating its intracellular levels. The sequence is that of Aquaporin-7 from Rattus norvegicus (Rat).